The following is a 445-amino-acid chain: DNA primase DnaG (445 aa).

Residues 166–252 form the Toprim domain; it reads DAIVVVEGRS…SVEDLSRSEV (87 aa). 3 residues coordinate Mg(2+): Glu172, Asp214, and Asp216. The interval 276 to 355 is disordered; sequence EEMSQAGEST…NGDGPTIPSL (80 aa). Low complexity predominate over residues 284–298; the sequence is STTADGGAVAAATSD. Residues 303–313 show a composition bias toward polar residues; that stretch reads NQPSPSSQTGS. Residues 324–337 are compositionally biased toward low complexity; the sequence is SVVDNSNATAVADA.

It belongs to the archaeal DnaG primase family. Forms a ternary complex with MCM helicase and DNA. The cofactor is Mg(2+).

It carries out the reaction ssDNA + n NTP = ssDNA/pppN(pN)n-1 hybrid + (n-1) diphosphate.. In terms of biological role, RNA polymerase that catalyzes the synthesis of short RNA molecules used as primers for DNA polymerase during DNA replication. The sequence is that of DNA primase DnaG from Haloarcula marismortui (strain ATCC 43049 / DSM 3752 / JCM 8966 / VKM B-1809) (Halobacterium marismortui).